Here is a 316-residue protein sequence, read N- to C-terminus: uncharacterized protein (316 aa).

Belongs to the asfivirus F317L family.

The protein localises to the virion. This is an uncharacterized protein from Ornithodoros (relapsing fever ticks).